The primary structure comprises 1128 residues: Major DNA-binding protein (1128 aa).

A required for nuclear localization region spans residues 1104–1128 (LGGGGQGSGGRRKRRLATVLPGLEV).

The protein belongs to the herpesviridae major DNA-binding protein family. As to quaternary structure, homooligomers. Forms double-helical filaments necessary for the formation of replication compartments within the host nucleus. Interacts with the origin-binding protein. Interacts with the helicase primase complex; this interaction stimulates primer synthesis activity of the helicase-primase complex. Interacts with the DNA polymerase. Interacts with the alkaline exonuclease; this interaction increases its nuclease processivity.

Its subcellular location is the virion tegument. It localises to the host nucleus. Functionally, plays several crucial roles in viral infection. Participates in the opening of the viral DNA origin to initiate replication by interacting with the origin-binding protein. May disrupt loops, hairpins and other secondary structures present on ssDNA to reduce and eliminate pausing of viral DNA polymerase at specific sites during elongation. Promotes viral DNA recombination by performing strand-transfer, characterized by the ability to transfer a DNA strand from a linear duplex to a complementary single-stranded DNA circle. Can also catalyze the renaturation of complementary single strands. Additionally, reorganizes the host cell nucleus, leading to the formation of prereplicative sites and replication compartments. This process is driven by the protein which can form double-helical filaments in the absence of DNA. In Epstein-Barr virus (strain GD1) (HHV-4), this protein is Major DNA-binding protein.